A 307-amino-acid polypeptide reads, in one-letter code: ATP synthase gamma chain (307 aa).

It belongs to the ATPase gamma chain family. F-type ATPases have 2 components, CF(1) - the catalytic core - and CF(0) - the membrane proton channel. CF(1) has five subunits: alpha(3), beta(3), gamma(1), delta(1), epsilon(1). CF(0) has three main subunits: a, b and c.

Its subcellular location is the cell membrane. Functionally, produces ATP from ADP in the presence of a proton gradient across the membrane. The gamma chain is believed to be important in regulating ATPase activity and the flow of protons through the CF(0) complex. In Bifidobacterium longum (strain DJO10A), this protein is ATP synthase gamma chain.